Consider the following 120-residue polypeptide: Large ribosomal subunit protein uL18 (120 aa).

The protein belongs to the universal ribosomal protein uL18 family. In terms of assembly, part of the 50S ribosomal subunit; part of the 5S rRNA/L5/L18/L25 subcomplex. Contacts the 5S and 23S rRNAs.

In terms of biological role, this is one of the proteins that bind and probably mediate the attachment of the 5S RNA into the large ribosomal subunit, where it forms part of the central protuberance. In Bacillus pumilus (strain SAFR-032), this protein is Large ribosomal subunit protein uL18.